A 500-amino-acid chain; its full sequence is Cytochrome P450 monooxygenase hepD (500 aa).

Residues 15 to 35 (WILLSLSLAFIVVYSLFYLAV) traverse the membrane as a helical segment. N-linked (GlcNAc...) asparagine glycans are attached at residues Asn99, Asn185, Asn373, and Asn409. Cys445 contacts heme. N-linked (GlcNAc...) asparagine glycosylation is present at Asn482.

Belongs to the cytochrome P450 family. Heme is required as a cofactor.

Its subcellular location is the membrane. Its pathway is secondary metabolite biosynthesis. In terms of biological role, cytochrome P450 monooxygenase; part of the gene cluster that mediates the biosynthesis of heptelidic acid (HA), a sesquiterpene lactone that acts as an inhibitor of glyceraldehyde-3-phosphatedehydrogenase (GAPDH) and a growth inhibitor of the salt-tolerant lactic acid bacteria in soy sauce brewing. This Aspergillus oryzae (strain ATCC 42149 / RIB 40) (Yellow koji mold) protein is Cytochrome P450 monooxygenase hepD.